Consider the following 1305-residue polypeptide: MDSPALGAVALLLAGFWHLGLTATNYNCDGALVSTLPSSAFTSSSEFFSTHSPSFAKLNRRDGAGGWSPLDSNEQQWLQVDLGDRVEIVGVATQGRYGSSDWVTSYTLMFSDTGRNWKQYRKDDTVWVFTGNSNADSVVHHKLLHSMKARFLRFVPLKWNVGGHIGLRVEVFGCSYKSDIADFDGRSSLLYRFNQKLMSTFKDVVSLKFKSMQEDGVLFHGEGQRGDYITLELQKGKLSLHINLGDSNLHFTNSHTSVTLGSLLDDQHWHSVLIERFNKQVNFTVDKHTQHFRTKGDSDHLDIDYELSFGGIPVPGKPGTFQRKNFHGCIENLYYNGVNIIDLAKRRKPQIYTGNVTFSCSEPQIVPITFVSSSRSYLLLPGTPQIDGLSVSFQFRTWNKDGLLLSTELSENSGSLLVYLHGGRLTLLIQKVAEDPVEISEGTNLHDGLWHSLNINARRHRITLTLDNNAATASHATTVSRIYSGNSYYFGGCPDNFTDSQCLNPITAFQGCMRLIFIDNQPKDLILVQQGSLGNFSDLHIDLCDIKDRCLPNYCEHGGKCSQSWTTFYCDCNDTSYMGATCHNSIYEQSCEAYRHQGKTSDFFYIDSDGSGPLGPLRVFCNITEDKIWTAVQHNNTGLTRVQGAGPEKPYTMSFNYNSSAEQLEAVINSAEYCEQEAAYHCKKSRLLNTPNGIPFAWWVGRANEKHLYWGGSLPGIQQCACGLEESCLDMRYFCNCDADREEWTNDTGLLAFKDHLPVTQIVITDTNRSNSEAAWKIGPLHCYGDRQFWNAASFNTEASYLHFPTFHAEVSADISFFFKTTSLSGVFLENLGMKDFIRVEIRSPKEITFSIDVGNGPTEATVQSPTPLNDNQWHYVRAERNLKQTSLQVDNLPKKVLEAPAEGHFRLQLNSQLFVGGTASRQKGFLGCIRSLHLNGQKLDLEERAKMTPGVKPGCPGHCSSYGNLCHNGGKCVEKYNGYSCDCTSSAYEGPFCKEEVSALFEAGTSITYIFQEPYPVTKNASTSSSAIYADAITSKENIAFSFLTAHAPSLLLYINTYFHEYLAVILSKNGSLQVRYKLSKDGLLIFTIDSGNFANREMHHVKINREGRELIIQVDQVIKLKHNFSEIDFKAIKSLTLGKVTDSLPLDPEVSKANAYGFTGCMSSVWYNHVAPLKAALRHPSIAPVTVKGSLTESSCSSLMETDVNTATTIYSSSDPFGKTDEREPLTNAVRSDSAVIGGVIAVVIFIIFCIIAIMSRFLYQHKQAHRSSQTKEKEYPENLESSFKADIDLQNTVSECKREYFI.

Residues 1-22 (MDSPALGAVALLLAGFWHLGLT) form the signal peptide. The region spanning 23 to 174 (ATNYNCDGAL…IGLRVEVFGC (152 aa)) is the F5/8 type C domain. The Extracellular portion of the chain corresponds to 23 to 1236 (ATNYNCDGAL…PLTNAVRSDS (1214 aa)). Laminin G-like domains lie at 180-360 (IADF…TFSC) and 367-544 (PITF…IDLC). 5 disulfides stabilise this stretch: Cys329–Cys360, Cys512–Cys544, Cys550–Cys561, Cys555–Cys570, and Cys572–Cys582. The EGF-like 1 domain occupies 546–583 (IKDRCLPNYCEHGGKCSQSWTTFYCDCNDTSYMGATCH). The region spanning 584-790 (NSIYEQSCEA…LHCYGDRQFW (207 aa)) is the Fibrinogen C-terminal domain. In terms of domain architecture, Laminin G-like 3 spans 791–956 (NAASFNTEAS…KMTPGVKPGC (166 aa)). 5 cysteine pairs are disulfide-bonded: Cys929/Cys956, Cys960/Cys973, Cys967/Cys982, Cys984/Cys994, and Cys1163/Cys1198. Residues 957-995 (PGHCSSYGNLCHNGGKCVEKYNGYSCDCTSSAYEGPFCK) form the EGF-like 2 domain. The Laminin G-like 4 domain maps to 1017–1198 (PVTKNASTSS…VKGSLTESSC (182 aa)). Residues 1237 to 1257 (AVIGGVIAVVIFIIFCIIAIM) form a helical membrane-spanning segment. At 1258 to 1305 (SRFLYQHKQAHRSSQTKEKEYPENLESSFKADIDLQNTVSECKREYFI) the chain is on the cytoplasmic side.

Belongs to the neurexin family. Expressed in brain.

The protein localises to the membrane. Its function is as follows. May play a role in the correct development and proper functioning of the peripheral and central nervous system and be involved in cell adhesion and intercellular communication. The polypeptide is Contactin-associated protein-like 5 (CNTNAP5) (Gallus gallus (Chicken)).